Reading from the N-terminus, the 236-residue chain is uncharacterized protein (236 aa).

Residues 1 to 24 (MRKKHFNMILKLALISSLLALAAS) form the signal peptide. Residues N59, N171, and N197 are each glycosylated (N-linked (GlcNAc...) asparagine).

The protein resides in the secreted. This is an uncharacterized protein from Caenorhabditis elegans.